We begin with the raw amino-acid sequence, 698 residues long: Probable Xaa-Pro aminopeptidase P (698 aa).

Mn(2+) is bound by residues D509, D520, E604, and E618.

It belongs to the peptidase M24B family. It depends on Mn(2+) as a cofactor.

It carries out the reaction Release of any N-terminal amino acid, including proline, that is linked to proline, even from a dipeptide or tripeptide.. Functionally, catalyzes the removal of a penultimate prolyl residue from the N-termini of peptides. The chain is Probable Xaa-Pro aminopeptidase P (AMPP) from Arthroderma benhamiae (strain ATCC MYA-4681 / CBS 112371) (Trichophyton mentagrophytes).